Consider the following 44-residue polypeptide: Photosystem II reaction center protein K (44 aa).

Positions 1–7 are excised as a propeptide; that stretch reads MTTLLLA. Residues 19–39 form a helical membrane-spanning segment; sequence IVDVLPVIPLLFLLLAFVWQA.

The protein belongs to the PsbK family. As to quaternary structure, PSII is composed of 1 copy each of membrane proteins PsbA, PsbB, PsbC, PsbD, PsbE, PsbF, PsbH, PsbI, PsbJ, PsbK, PsbL, PsbM, PsbT, PsbX, PsbY, PsbZ, Psb30/Ycf12, at least 3 peripheral proteins of the oxygen-evolving complex and a large number of cofactors. It forms dimeric complexes.

The protein resides in the plastid. It localises to the chloroplast thylakoid membrane. Its function is as follows. One of the components of the core complex of photosystem II (PSII). PSII is a light-driven water:plastoquinone oxidoreductase that uses light energy to abstract electrons from H(2)O, generating O(2) and a proton gradient subsequently used for ATP formation. It consists of a core antenna complex that captures photons, and an electron transfer chain that converts photonic excitation into a charge separation. In Tupiella akineta (Green alga), this protein is Photosystem II reaction center protein K.